Here is a 101-residue protein sequence, read N- to C-terminus: NAD(P)H-quinone oxidoreductase subunit 4L, chloroplastic (101 aa).

3 helical membrane-spanning segments follow: residues 2-22 (MLEYVLGLSAYLFSIGIYGLI), 32-52 (MCLELILNAVNLNFVTFSDFF), and 61-81 (ILSIFVISIAAAEAAIGPAIV).

The protein belongs to the complex I subunit 4L family. As to quaternary structure, NDH is composed of at least 16 different subunits, 5 of which are encoded in the nucleus.

It localises to the plastid. The protein resides in the chloroplast thylakoid membrane. It catalyses the reaction a plastoquinone + NADH + (n+1) H(+)(in) = a plastoquinol + NAD(+) + n H(+)(out). It carries out the reaction a plastoquinone + NADPH + (n+1) H(+)(in) = a plastoquinol + NADP(+) + n H(+)(out). Functionally, NDH shuttles electrons from NAD(P)H:plastoquinone, via FMN and iron-sulfur (Fe-S) centers, to quinones in the photosynthetic chain and possibly in a chloroplast respiratory chain. The immediate electron acceptor for the enzyme in this species is believed to be plastoquinone. Couples the redox reaction to proton translocation, and thus conserves the redox energy in a proton gradient. This is NAD(P)H-quinone oxidoreductase subunit 4L, chloroplastic from Populus alba (White poplar).